The following is a 420-amino-acid chain: MPEGNGTVALAFSGGLDTTVCVSLLKEEYGYDEVIGVTVDVGQPDYEFEEAEETAEALGVEQHVVDATEEFADLCMEAVKANADYQGYPLGTALARPVIAKAILSVAEDEGCSAVAHGCTGKGNDQLRFESVWRDSDLDVIAPVRELGLTREWENEYAAEKGLPVEGGDGGRYSIDTNLWSRSIEGSELEDPSTIPADDIYKWTDNPSDKDAELVEVEFEDGVPVAVDGEELGGVELIEQLNKQAGAHGIGRTDMMEDRMLGLKVRENYEHPAATVLLTAHEALEGLVLTQEERQFKAQVDQEWSQKAYQGLVDAPLTGALEAFIDDTNERVTGTVTVKLEGGHCRPVSRESDYAVYSESAASFNEEDVSGGITQQDATGVAKYHGFQSRLANKILDDAKKGAAVTDGSGDHAASEDTEE.

11-19 provides a ligand contact to ATP; it reads AFSGGLDTT. Tyrosine 88 serves as a coordination point for L-citrulline. ATP is bound at residue glycine 118. Positions 120, 124, and 125 each coordinate L-aspartate. L-citrulline is bound at residue asparagine 124. L-citrulline-binding residues include arginine 128, serine 174, serine 183, glutamate 257, and tyrosine 269. The disordered stretch occupies residues 401-420; the sequence is KGAAVTDGSGDHAASEDTEE. The segment covering 409 to 420 has biased composition (basic and acidic residues); sequence SGDHAASEDTEE.

This sequence belongs to the argininosuccinate synthase family. Type 1 subfamily. As to quaternary structure, homotetramer.

The protein resides in the cytoplasm. The catalysed reaction is L-citrulline + L-aspartate + ATP = 2-(N(omega)-L-arginino)succinate + AMP + diphosphate + H(+). The protein operates within amino-acid biosynthesis; L-arginine biosynthesis; L-arginine from L-ornithine and carbamoyl phosphate: step 2/3. The chain is Argininosuccinate synthase from Haloarcula marismortui (strain ATCC 43049 / DSM 3752 / JCM 8966 / VKM B-1809) (Halobacterium marismortui).